A 380-amino-acid polypeptide reads, in one-letter code: Queuine tRNA-ribosyltransferase (380 aa).

Aspartate 96 functions as the Proton acceptor in the catalytic mechanism. Residues 96 to 100 (DSGGF), aspartate 150, glutamine 193, and glycine 220 each bind substrate. Residues 251-257 (GVGAPDS) are RNA binding. Residue aspartate 270 is the Nucleophile of the active site. The segment at 275–279 (TRIAR) is RNA binding; important for wobble base 34 recognition. Residues cysteine 308, cysteine 310, cysteine 313, and histidine 339 each contribute to the Zn(2+) site.

This sequence belongs to the queuine tRNA-ribosyltransferase family. In terms of assembly, homodimer. Within each dimer, one monomer is responsible for RNA recognition and catalysis, while the other monomer binds to the replacement base PreQ1. The cofactor is Zn(2+).

The enzyme catalyses 7-aminomethyl-7-carbaguanine + guanosine(34) in tRNA = 7-aminomethyl-7-carbaguanosine(34) in tRNA + guanine. It participates in tRNA modification; tRNA-queuosine biosynthesis. In terms of biological role, catalyzes the base-exchange of a guanine (G) residue with the queuine precursor 7-aminomethyl-7-deazaguanine (PreQ1) at position 34 (anticodon wobble position) in tRNAs with GU(N) anticodons (tRNA-Asp, -Asn, -His and -Tyr). Catalysis occurs through a double-displacement mechanism. The nucleophile active site attacks the C1' of nucleotide 34 to detach the guanine base from the RNA, forming a covalent enzyme-RNA intermediate. The proton acceptor active site deprotonates the incoming PreQ1, allowing a nucleophilic attack on the C1' of the ribose to form the product. After dissociation, two additional enzymatic reactions on the tRNA convert PreQ1 to queuine (Q), resulting in the hypermodified nucleoside queuosine (7-(((4,5-cis-dihydroxy-2-cyclopenten-1-yl)amino)methyl)-7-deazaguanosine). This is Queuine tRNA-ribosyltransferase from Streptococcus mutans serotype c (strain ATCC 700610 / UA159).